A 225-amino-acid chain; its full sequence is Urease accessory protein UreF (225 aa).

The protein belongs to the UreF family. UreD, UreF and UreG form a complex that acts as a GTP-hydrolysis-dependent molecular chaperone, activating the urease apoprotein by helping to assemble the nickel containing metallocenter of UreC. The UreE protein probably delivers the nickel.

It localises to the cytoplasm. Its function is as follows. Required for maturation of urease via the functional incorporation of the urease nickel metallocenter. The chain is Urease accessory protein UreF from Geobacillus kaustophilus (strain HTA426).